A 520-amino-acid chain; its full sequence is MTALTVMVQGTASSVGKSLLCAALCRIFQRRGLRVAPFKSQNMALNSFATLDGGEIGRAQAVQAEAARVAPTVDMNPVLLKPEGDSRSQVIVLGKPIGSLHARDYFAYRGELKDIIARSLGRLREAHDVVVIEGAGSPAEINLKDRDIVNMHVARAADAPVLLAGDIDRGGVFAALVGTMALLEPDERARVAAFVINKFRGDLKLLEPGLDMLTARTGVPVLGVVPYLKQLRIADEDSVSLEGRRRRAPAGPGELDIAVVRLPRISNYDDVEPLEHEPGVVVRFIERPDEIGNADLVLLPGTKSTMADLAWLRASGLAEAVAARARQGGWTLGICGGCQMLGGAIEDPEGVESAEPAARGLGLLDVWTRFERTKTVAQVRARLAGGSFLGPAGAVNAGEAEGEGAGELTGYEIHMGRVERVGGAAAAFAIGSRGGKAEPALDGAVSADGAVVGTMIHGILDNDGLRRSLLAALRERRGLPRAAGEPAIPSRHEEYDRLANAVEASLDRALLDRIVGLDRR.

The 212-residue stretch at Glu-254 to Leu-465 folds into the GATase cobBQ-type domain. The Nucleophile role is filled by Cys-335. Residue His-457 is part of the active site.

The protein belongs to the CobB/CobQ family. CobQ subfamily.

Its pathway is cofactor biosynthesis; adenosylcobalamin biosynthesis. Functionally, catalyzes amidations at positions B, D, E, and G on adenosylcobyrinic A,C-diamide. NH(2) groups are provided by glutamine, and one molecule of ATP is hydrogenolyzed for each amidation. The sequence is that of Cobyric acid synthase from Sorangium cellulosum (strain So ce56) (Polyangium cellulosum (strain So ce56)).